The sequence spans 656 residues: Histidine decarboxylase (656 aa).

Y84 and H197 together coordinate substrate. K308 bears the N6-(pyridoxal phosphate)lysine mark. A phosphoserine; by PKA mark is found at S343 and S362. The segment at 481–502 is disordered; sequence HCTSQPSPRAKNLIPPPVTRDS.

It belongs to the group II decarboxylase family. Homodimer. It depends on pyridoxal 5'-phosphate as a cofactor. Post-translationally, may be post-translationally processed. As to expression, brain, glandular regions of the stomach, mast cells and fetal liver.

The catalysed reaction is L-histidine + H(+) = histamine + CO2. It functions in the pathway amine and polyamine biosynthesis; histamine biosynthesis; histamine from L-histidine: step 1/1. Phosphorylation of brain HDC by cAMP-dependent protein kinase leads to enzyme inactivation. Its function is as follows. Catalyzes the biosynthesis of histamine from histidine. The chain is Histidine decarboxylase (Hdc) from Rattus norvegicus (Rat).